Consider the following 648-residue polypeptide: MDDTDKRVHKYIEKHDLIRSDDKLLVAVSGGPDSLALLHFLWNSNLVPKEAISVAHLNHHLRENAANEQNVVETFCESQGIPFYIEEVDVKSRAESLQKGIEETARIVRYDFFEKVMAEKKINKLALAHHADDQIETILMRLVRGSASIGWSGIQPKRELKGGQAIRPFLPITKAEIIDYAQKHELAYEIDESNTSQEYTRNRYRAQLLPFLKQENPAVYSHFERFSEETSEDFQFLEALASDLLKKNLIKNGKRTTLLLTNFKNEANPLQRRAIHLLLRYLYNEDASFITVNHIYQIIQMIQSDNPSSSIDLPNKLVANRAYDKLHFQFGEREAPSEFYHQLELNDRIELDNKASIRLKLKSSVVQTNGLNGMLLDAEEITLPLIVRNRVNGDRMTMKGQAGSKKLKDIFIDAKIPRQERDKLPVITDYTGKILWVPGVKKSAYDREFSRSKKQYIIRYTRNIGGNESMHNDIQKVLISEDELQEKIRELGRELTTEYEGRNPLVVGVLKGATPFMTDLLKRVDTYLEMDFMDVSSYGNGTVSSGEVKIIKDLNASVEGRDVLVIEDIIDSGRTLSYLVDLIKYRKAKSVKLVTLLDKPAGRNVEIEADYVGFVVPNEFVVGYGLDYAERYRNLPYIGILKPEIYSE.

Residue 29 to 34 coordinates ATP; that stretch reads SGGPDS. A Mg(2+)-binding site is contributed by Asp627.

It in the N-terminal section; belongs to the tRNA(Ile)-lysidine synthase family. This sequence in the C-terminal section; belongs to the purine/pyrimidine phosphoribosyltransferase family. Mg(2+) serves as cofactor.

It localises to the cytoplasm. The enzyme catalyses IMP + diphosphate = hypoxanthine + 5-phospho-alpha-D-ribose 1-diphosphate. It catalyses the reaction GMP + diphosphate = guanine + 5-phospho-alpha-D-ribose 1-diphosphate. It carries out the reaction cytidine(34) in tRNA(Ile2) + L-lysine + ATP = lysidine(34) in tRNA(Ile2) + AMP + diphosphate + H(+). Functionally, ligates lysine onto the cytidine present at position 34 of the AUA codon-specific tRNA(Ile) that contains the anticodon CAU, in an ATP-dependent manner. Cytidine is converted to lysidine, thus changing the amino acid specificity of the tRNA from methionine to isoleucine. The sequence is that of Bifunctional protein TilS/HprT (tilS/hprT) from Listeria monocytogenes serotype 4b (strain F2365).